Here is a 1067-residue protein sequence, read N- to C-terminus: Carbamoyl phosphate synthase large chain (1067 aa).

The segment at 1–401 is carboxyphosphate synthetic domain; it reads MPLNKDIKKV…AFLKGIRSLE (401 aa). The ATP site is built by Arg-129, Arg-169, Gly-175, Gly-176, Lys-208, Val-210, Glu-215, Gly-241, Ile-242, His-243, Gln-284, and Glu-298. The ATP-grasp 1 domain maps to 133-327; the sequence is RDMMNRINQP…IAKVAAKIAL (195 aa). 3 residues coordinate Mg(2+): Gln-284, Glu-298, and Asn-300. Positions 284, 298, and 300 each coordinate Mn(2+). The tract at residues 402–549 is oligomerization domain; that stretch reads IGKYSLEHKK…YSTYEQYDEV (148 aa). The tract at residues 550–932 is carbamoyl phosphate synthetic domain; it reads VVSDNKKVVV…ALYKGFVGAS (383 aa). The region spanning 674–864 is the ATP-grasp 2 domain; it reads DDLLERLNIA…IVDIATRIML (191 aa). Positions 710, 749, 751, 755, 780, 781, 782, 783, 823, and 835 each coordinate ATP. Residues Gln-823, Glu-835, and Asn-837 each coordinate Mg(2+). Gln-823, Glu-835, and Asn-837 together coordinate Mn(2+). In terms of domain architecture, MGS-like spans 933 to 1067; the sequence is MYTGDKGKTI…NRELEVFNLI (135 aa). Residues 933-1067 form an allosteric domain region; that stretch reads MYTGDKGKTI…NRELEVFNLI (135 aa).

This sequence belongs to the CarB family. As to quaternary structure, composed of two chains; the small (or glutamine) chain promotes the hydrolysis of glutamine to ammonia, which is used by the large (or ammonia) chain to synthesize carbamoyl phosphate. Tetramer of heterodimers (alpha,beta)4. It depends on Mg(2+) as a cofactor. The cofactor is Mn(2+).

The catalysed reaction is hydrogencarbonate + L-glutamine + 2 ATP + H2O = carbamoyl phosphate + L-glutamate + 2 ADP + phosphate + 2 H(+). It carries out the reaction hydrogencarbonate + NH4(+) + 2 ATP = carbamoyl phosphate + 2 ADP + phosphate + 2 H(+). It participates in amino-acid biosynthesis; L-arginine biosynthesis; carbamoyl phosphate from bicarbonate: step 1/1. It functions in the pathway pyrimidine metabolism; UMP biosynthesis via de novo pathway; (S)-dihydroorotate from bicarbonate: step 1/3. Large subunit of the glutamine-dependent carbamoyl phosphate synthetase (CPSase). CPSase catalyzes the formation of carbamoyl phosphate from the ammonia moiety of glutamine, carbonate, and phosphate donated by ATP, constituting the first step of 2 biosynthetic pathways, one leading to arginine and/or urea and the other to pyrimidine nucleotides. The large subunit (synthetase) binds the substrates ammonia (free or transferred from glutamine from the small subunit), hydrogencarbonate and ATP and carries out an ATP-coupled ligase reaction, activating hydrogencarbonate by forming carboxy phosphate which reacts with ammonia to form carbamoyl phosphate. This chain is Carbamoyl phosphate synthase large chain, found in Clostridium perfringens (strain 13 / Type A).